We begin with the raw amino-acid sequence, 95 residues long: CRISPR-associated endoribonuclease Cas2 (95 aa).

Asp-9 is a binding site for Mg(2+).

The protein belongs to the CRISPR-associated endoribonuclease Cas2 protein family. Homodimer, forms a heterotetramer with a Cas1 homodimer. Requires Mg(2+) as cofactor.

Functionally, CRISPR (clustered regularly interspaced short palindromic repeat), is an adaptive immune system that provides protection against mobile genetic elements (viruses, transposable elements and conjugative plasmids). CRISPR clusters contain sequences complementary to antecedent mobile elements and target invading nucleic acids. CRISPR clusters are transcribed and processed into CRISPR RNA (crRNA). Functions as a ssRNA-specific endoribonuclease. Involved in the integration of spacer DNA into the CRISPR cassette. The sequence is that of CRISPR-associated endoribonuclease Cas2 from Methylorubrum extorquens (strain CM4 / NCIMB 13688) (Methylobacterium extorquens).